Reading from the N-terminus, the 424-residue chain is D-inositol 3-phosphate glycosyltransferase (424 aa).

Residue His-21 participates in 1D-myo-inositol 3-phosphate binding. Residues 27 to 28 and Gly-35 each bind UDP-N-acetyl-alpha-D-glucosamine; that span reads QP. Residues 32–37, Lys-90, Tyr-123, Thr-147, and Arg-167 each bind 1D-myo-inositol 3-phosphate; that span reads DAGGMN. Arg-241, Lys-246, and Gln-299 together coordinate UDP-N-acetyl-alpha-D-glucosamine. 3 residues coordinate Mg(2+): Phe-308, Gln-309, and Ala-311. Positions 321 and 329 each coordinate UDP-N-acetyl-alpha-D-glucosamine. Residue Thr-335 participates in Mg(2+) binding.

The protein belongs to the glycosyltransferase group 1 family. MshA subfamily. In terms of assembly, homodimer.

The enzyme catalyses 1D-myo-inositol 3-phosphate + UDP-N-acetyl-alpha-D-glucosamine = 1D-myo-inositol 2-acetamido-2-deoxy-alpha-D-glucopyranoside 3-phosphate + UDP + H(+). Its function is as follows. Catalyzes the transfer of a N-acetyl-glucosamine moiety to 1D-myo-inositol 3-phosphate to produce 1D-myo-inositol 2-acetamido-2-deoxy-glucopyranoside 3-phosphate in the mycothiol biosynthesis pathway. The sequence is that of D-inositol 3-phosphate glycosyltransferase from Mycobacterium avium (strain 104).